Here is a 323-residue protein sequence, read N- to C-terminus: Olfactory receptor 2AE1 (323 aa).

Residues 1–25 (MWQKNQTSLADFILEGLFDDSLTHL) are Extracellular-facing. Residue asparagine 5 is glycosylated (N-linked (GlcNAc...) asparagine). The helical transmembrane segment at 26-49 (FLFSLTMVVFLIAVSGNTLTILLI) threads the bilayer. Topologically, residues 50–57 (CIDPQLHT) are cytoplasmic. Residues 58 to 79 (PMYFLLSQLSLMDLMHVSTIIL) form a helical membrane-spanning segment. The Extracellular segment spans residues 80–100 (KMATNYLSGKKSISFVGCATQ). An intrachain disulfide couples cysteine 97 to cysteine 189. A helical transmembrane segment spans residues 101 to 120 (HFLYLCLGGAECFLLAVMSY). The Cytoplasmic portion of the chain corresponds to 121 to 139 (DRYVAICHPLRYAVLMNKK). Residues 140–158 (VGLMMAVMSWLGASVNSLI) traverse the membrane as a helical segment. Residues 159 to 195 (HMAILMHFPFCGPRKVYHFYCEFPAVVKLVCGDITVY) are Extracellular-facing. A helical transmembrane segment spans residues 196-218 (ETTVYISSILLLLPIFLISTSYV). The Cytoplasmic segment spans residues 219-235 (FILQSVIQMRSSGSKRN). A helical transmembrane segment spans residues 236–258 (AFATCGSHLTVVSLWFGACIFSY). The Extracellular portion of the chain corresponds to 259-271 (MRPRSQCTLLQNK). A helical transmembrane segment spans residues 272 to 291 (VGSVFYSIITPTLNSLIYTL). Residues 292–323 (RNKDVAKALRRVLRRDVITQCIQRLQLWLPRV) are Cytoplasmic-facing.

Belongs to the G-protein coupled receptor 1 family.

Its subcellular location is the cell membrane. In terms of biological role, odorant receptor. The sequence is that of Olfactory receptor 2AE1 (OR2AE1) from Homo sapiens (Human).